We begin with the raw amino-acid sequence, 195 residues long: Probable GTP-binding protein EngB (195 aa).

An EngB-type G domain is found at 22–195 (GLPEIALAGR…WNAILAKINK (174 aa)). Residues 30 to 37 (GRSNVGKS), 57 to 61 (GKTQT), 75 to 78 (DVPG), 142 to 145 (TKAD), and 174 to 176 (FSS) contribute to the GTP site. S37 and T59 together coordinate Mg(2+).

Belongs to the TRAFAC class TrmE-Era-EngA-EngB-Septin-like GTPase superfamily. EngB GTPase family. The cofactor is Mg(2+).

Necessary for normal cell division and for the maintenance of normal septation. In Bacillus pumilus (strain SAFR-032), this protein is Probable GTP-binding protein EngB.